Here is a 276-residue protein sequence, read N- to C-terminus: Diaminopimelate epimerase (276 aa).

Substrate is bound by residues Asn13, Gln46, and Asn66. The Proton donor role is filled by Cys75. Residues Gly76 to Asn77, Asn159, Asn192, and Glu210 to Arg211 each bind substrate. Residue Cys219 is the Proton acceptor of the active site. Gly220–Ser221 provides a ligand contact to substrate.

The protein belongs to the diaminopimelate epimerase family. In terms of assembly, homodimer.

The protein localises to the cytoplasm. It catalyses the reaction (2S,6S)-2,6-diaminopimelate = meso-2,6-diaminopimelate. The protein operates within amino-acid biosynthesis; L-lysine biosynthesis via DAP pathway; DL-2,6-diaminopimelate from LL-2,6-diaminopimelate: step 1/1. Functionally, catalyzes the stereoinversion of LL-2,6-diaminopimelate (L,L-DAP) to meso-diaminopimelate (meso-DAP), a precursor of L-lysine and an essential component of the bacterial peptidoglycan. The protein is Diaminopimelate epimerase of Colwellia psychrerythraea (strain 34H / ATCC BAA-681) (Vibrio psychroerythus).